A 299-amino-acid chain; its full sequence is Ribosomal protein L11 methyltransferase (299 aa).

4 residues coordinate S-adenosyl-L-methionine: Thr139, Gly163, Asp185, and Asn232.

Belongs to the methyltransferase superfamily. PrmA family.

It localises to the cytoplasm. It catalyses the reaction L-lysyl-[protein] + 3 S-adenosyl-L-methionine = N(6),N(6),N(6)-trimethyl-L-lysyl-[protein] + 3 S-adenosyl-L-homocysteine + 3 H(+). Functionally, methylates ribosomal protein L11. This Crocosphaera subtropica (strain ATCC 51142 / BH68) (Cyanothece sp. (strain ATCC 51142)) protein is Ribosomal protein L11 methyltransferase.